The following is a 382-amino-acid chain: 3-hydroxyisobutyryl-CoA hydrolase, mitochondrial (382 aa).

The substrate site is built by Glu-117, Gly-142, Glu-165, and Asp-173.

Belongs to the enoyl-CoA hydratase/isomerase family.

The protein resides in the mitochondrion. It catalyses the reaction 3-hydroxy-2-methylpropanoyl-CoA + H2O = 3-hydroxy-2-methylpropanoate + CoA + H(+). Its pathway is amino-acid degradation; L-valine degradation. Functionally, hydrolyzes 3-hydroxyisobutyryl-CoA (HIBYL-CoA), a saline catabolite. Has high activity toward isobutyryl-CoA. Could be an isobutyryl-CoA dehydrogenase that functions in valine catabolism. Also hydrolyzes 3-hydroxypropanoyl-CoA. The sequence is that of 3-hydroxyisobutyryl-CoA hydrolase, mitochondrial (hibch) from Danio rerio (Zebrafish).